The following is a 404-amino-acid chain: D-galactonate dehydratase family member PC1_0802 (404 aa).

Substrate contacts are provided by Asn-37 and His-122. Residue Tyr-159 is the Proton donor/acceptor of the active site. Asp-212 is a binding site for Mg(2+). His-214 acts as the Proton donor/acceptor in catalysis. Mg(2+) is bound by residues Glu-238 and Glu-264. 5 residues coordinate substrate: Glu-264, Arg-285, His-314, Asp-318, and Glu-341.

Belongs to the mandelate racemase/muconate lactonizing enzyme family. GalD subfamily. Mg(2+) is required as a cofactor.

It carries out the reaction D-mannonate = 2-dehydro-3-deoxy-D-gluconate + H2O. Its function is as follows. Has low D-mannonate dehydratase activity (in vitro), suggesting that this is not a physiological substrate and that it has no significant role in D-mannonate degradation in vivo. Has no detectable activity with a panel of 70 other acid sugars (in vitro). In Pectobacterium carotovorum subsp. carotovorum (strain PC1), this protein is D-galactonate dehydratase family member PC1_0802.